A 220-amino-acid chain; its full sequence is MFDIVPIRIFGTSSIGVFLATNNSVTFLPPDVPEKIDDIVRNTLRTTVARLTVAKSPLLGIFTVVNDNGVLLPPMVLEEEIRLFKALGLNVEVLNTKYTAISNLILAGNKVALVSPLLEPSVRKVVADVLGVEVIVDTIAGNPLVGSLAVLNSRGVLVAPEATDEDLKKLAEYFKAKTDLGTVNKGKSFLRGGIVVNDHGALVGDETAGPEFMRIQQVLG.

This sequence belongs to the eIF-6 family.

Binds to the 50S ribosomal subunit and prevents its association with the 30S ribosomal subunit to form the 70S initiation complex. This is Translation initiation factor 6 from Pyrobaculum arsenaticum (strain DSM 13514 / JCM 11321 / PZ6).